Here is a 380-residue protein sequence, read N- to C-terminus: Succinyl-diaminopimelate desuccinylase (380 aa).

His69 serves as a coordination point for Zn(2+). The active site involves Asp71. Asp102 lines the Zn(2+) pocket. Catalysis depends on Glu135, which acts as the Proton acceptor. Residues Glu136, Glu164, and His353 each contribute to the Zn(2+) site.

Belongs to the peptidase M20A family. DapE subfamily. As to quaternary structure, homodimer. It depends on Zn(2+) as a cofactor. The cofactor is Co(2+).

The catalysed reaction is N-succinyl-(2S,6S)-2,6-diaminopimelate + H2O = (2S,6S)-2,6-diaminopimelate + succinate. Its pathway is amino-acid biosynthesis; L-lysine biosynthesis via DAP pathway; LL-2,6-diaminopimelate from (S)-tetrahydrodipicolinate (succinylase route): step 3/3. Its function is as follows. Catalyzes the hydrolysis of N-succinyl-L,L-diaminopimelic acid (SDAP), forming succinate and LL-2,6-diaminopimelate (DAP), an intermediate involved in the bacterial biosynthesis of lysine and meso-diaminopimelic acid, an essential component of bacterial cell walls. The polypeptide is Succinyl-diaminopimelate desuccinylase (Ruegeria pomeroyi (strain ATCC 700808 / DSM 15171 / DSS-3) (Silicibacter pomeroyi)).